The chain runs to 161 residues: Phosphopantetheine adenylyltransferase (161 aa).

Thr10 contacts substrate. ATP contacts are provided by residues 10–11 (TF) and His18. Lys42, Leu74, and Arg88 together coordinate substrate. ATP-binding positions include 89 to 91 (GLR), Glu99, and 124 to 130 (NSFISST).

It belongs to the bacterial CoaD family. In terms of assembly, homohexamer. It depends on Mg(2+) as a cofactor.

The protein resides in the cytoplasm. The enzyme catalyses (R)-4'-phosphopantetheine + ATP + H(+) = 3'-dephospho-CoA + diphosphate. It participates in cofactor biosynthesis; coenzyme A biosynthesis; CoA from (R)-pantothenate: step 4/5. Functionally, reversibly transfers an adenylyl group from ATP to 4'-phosphopantetheine, yielding dephospho-CoA (dPCoA) and pyrophosphate. The chain is Phosphopantetheine adenylyltransferase from Photobacterium profundum (strain SS9).